We begin with the raw amino-acid sequence, 420 residues long: C-methyltransferase NovU (420 aa).

Belongs to the methyltransferase superfamily.

It functions in the pathway antibiotic biosynthesis; novobiocin biosynthesis. Functionally, C-methyltransferase that acts together with NovW to catalyze the formation of dTDP-4-keto-6-deoxy-5-C-methyl-L-lyxo-hexose from dTDP-4-keto-6-deoxy-D-glucose in the novobiocin biosynthesis pathway, an aminocoumarin family antibiotic that targets bacterial DNA gyrases. The sequence is that of C-methyltransferase NovU (novU) from Streptomyces niveus (Streptomyces spheroides).